A 309-amino-acid polypeptide reads, in one-letter code: Bifunctional methylenetetrahydrofolate dehydrogenase/cyclohydrolase, mitochondrial (309 aa).

It belongs to the tetrahydrofolate dehydrogenase/cyclohydrolase family. In terms of assembly, homodimer. Mg(2+) is required as a cofactor.

Its subcellular location is the mitochondrion. It catalyses the reaction (6R)-5,10-methylene-5,6,7,8-tetrahydrofolate + NAD(+) = (6R)-5,10-methenyltetrahydrofolate + NADH. The catalysed reaction is (6R)-5,10-methenyltetrahydrofolate + H2O = (6R)-10-formyltetrahydrofolate + H(+). In terms of biological role, may play a role in spermatogenesis. This Drosophila melanogaster (Fruit fly) protein is Bifunctional methylenetetrahydrofolate dehydrogenase/cyclohydrolase, mitochondrial (Nmdmc).